A 341-amino-acid chain; its full sequence is Glyceraldehyde-3-phosphate dehydrogenase 2 (341 aa).

Residues 13-14 (RI), aspartate 35, and lysine 85 each bind NAD(+). D-glyceraldehyde 3-phosphate-binding positions include 157–159 (SCT), threonine 188, 217–218 (TG), and arginine 240. Residue cysteine 158 is the Nucleophile of the active site. Asparagine 322 is a binding site for NAD(+).

This sequence belongs to the glyceraldehyde-3-phosphate dehydrogenase family. Homotetramer.

It localises to the cytoplasm. The catalysed reaction is D-glyceraldehyde 3-phosphate + phosphate + NAD(+) = (2R)-3-phospho-glyceroyl phosphate + NADH + H(+). The protein operates within carbohydrate degradation; glycolysis; pyruvate from D-glyceraldehyde 3-phosphate: step 1/5. The protein is Glyceraldehyde-3-phosphate dehydrogenase 2 of Caenorhabditis briggsae.